A 116-amino-acid polypeptide reads, in one-letter code: Putative iron-sulfur cluster insertion protein ErpA (116 aa).

Iron-sulfur cluster-binding residues include Cys-44, Cys-108, and Cys-110.

The protein belongs to the HesB/IscA family. As to quaternary structure, homodimer. Iron-sulfur cluster is required as a cofactor.

Its function is as follows. Required for insertion of 4Fe-4S clusters. This chain is Putative iron-sulfur cluster insertion protein ErpA, found in Janthinobacterium sp. (strain Marseille) (Minibacterium massiliensis).